The chain runs to 375 residues: Tyrosine--tRNA ligase (375 aa).

Residues Y37, Y168, Q172, D175, and Q190 each coordinate L-tyrosine. The 'KMSKS' region motif lies at K251–S255. Residue K254 participates in ATP binding.

Belongs to the class-I aminoacyl-tRNA synthetase family. TyrS type 4 subfamily. Homodimer.

It is found in the cytoplasm. The catalysed reaction is tRNA(Tyr) + L-tyrosine + ATP = L-tyrosyl-tRNA(Tyr) + AMP + diphosphate + H(+). Its function is as follows. Catalyzes the attachment of tyrosine to tRNA(Tyr) in a two-step reaction: tyrosine is first activated by ATP to form Tyr-AMP and then transferred to the acceptor end of tRNA(Tyr). The chain is Tyrosine--tRNA ligase from Thermococcus onnurineus (strain NA1).